We begin with the raw amino-acid sequence, 257 residues long: Acetylglutamate kinase (257 aa).

Substrate is bound by residues glycine 43–glycine 44, arginine 65, and asparagine 157. Residues aspartate 180–leucine 185 and isoleucine 208–threonine 210 each bind ATP.

It belongs to the acetylglutamate kinase family. ArgB subfamily. In terms of assembly, homodimer.

The protein localises to the cytoplasm. The catalysed reaction is N-acetyl-L-glutamate + ATP = N-acetyl-L-glutamyl 5-phosphate + ADP. The protein operates within amino-acid biosynthesis; L-arginine biosynthesis; N(2)-acetyl-L-ornithine from L-glutamate: step 2/4. In terms of biological role, catalyzes the ATP-dependent phosphorylation of N-acetyl-L-glutamate. The protein is Acetylglutamate kinase of Buchnera aphidicola subsp. Acyrthosiphon pisum (strain 5A).